Reading from the N-terminus, the 511-residue chain is Cobyric acid synthase (511 aa).

A GATase cobBQ-type domain is found at 251–443; that stretch reads LLDIAIICLP…IHGIFDNDIF (193 aa). The active-site Nucleophile is the cysteine 332. Residue histidine 435 is part of the active site.

This sequence belongs to the CobB/CobQ family. CobQ subfamily.

It participates in cofactor biosynthesis; adenosylcobalamin biosynthesis. Functionally, catalyzes amidations at positions B, D, E, and G on adenosylcobyrinic A,C-diamide. NH(2) groups are provided by glutamine, and one molecule of ATP is hydrogenolyzed for each amidation. The sequence is that of Cobyric acid synthase from Listeria innocua serovar 6a (strain ATCC BAA-680 / CLIP 11262).